A 380-amino-acid polypeptide reads, in one-letter code: Kappa-type opioid receptor (380 aa).

Over 1-57 (MEPPVQIFRGEPGPTCSPSTCLPPNGSGWFPGWAEPDGNGSAGSEDVLLEPAHISPV) the chain is Extracellular. 2 N-linked (GlcNAc...) asparagine glycosylation sites follow: Asn25 and Asn39. Residues 58–85 (ILVIITAVYSVVFVVGLVGNSLVMFVII) form a helical membrane-spanning segment. Residues 86-95 (RYTKMKTATN) are Cytoplasmic-facing. The helical transmembrane segment at 96–119 (IYIFNLALADALVTTTMPFQSTVY) threads the bilayer. Residues 120-132 (LMNSWPFGDVLCK) lie on the Extracellular side of the membrane. An intrachain disulfide couples Cys131 to Cys210. A helical transmembrane segment spans residues 133–154 (VVISIDYYNMFTSIFTLTMMSV). Residues 155-173 (DRYIAVCHPVKALDFRTPL) are Cytoplasmic-facing. The helical transmembrane segment at 174 to 196 (KAKIINICIWILSSSVGISAIVL) threads the bilayer. Residues 197–222 (GGTKVREDMEVIECSLQFPDDDYSWW) lie on the Extracellular side of the membrane. Residues 223 to 247 (DLFMKVCVFVFAFVIPVLIIIVCYT) traverse the membrane as a helical segment. The Cytoplasmic segment spans residues 248–274 (LMILRLKSVRLLSGSREKDRNLRRITR). The chain crosses the membrane as a helical span at residues 275-296 (LVLVVVAVFVVCWTPIHIFILV). The Extracellular portion of the chain corresponds to 297–311 (EALGSTAHSTAALSS). A helical transmembrane segment spans residues 312-333 (YYFCIALGYTNSSLNPILYAFL). The Cytoplasmic segment spans residues 334–380 (DENFKRCFRDFCFPIKMRMERQSTSRVRNTVQDPAYVREVDGVNKPV). Cys345 carries S-palmitoyl cysteine lipidation.

Belongs to the G-protein coupled receptor 1 family. In terms of assembly, interacts with NHERF1. Interacts with GABARAPL1.

Its subcellular location is the cell membrane. In terms of biological role, G-protein coupled opioid receptor that functions as a receptor for endogenous alpha-neoendorphins and dynorphins, but has low affinity for beta-endorphins. Also functions as a receptor for various synthetic opioids and for the psychoactive diterpene salvinorin A. Ligand binding causes a conformation change that triggers signaling via guanine nucleotide-binding proteins (G proteins) and modulates the activity of down-stream effectors, such as adenylate cyclase. Signaling leads to the inhibition of adenylate cyclase activity. Inhibits neurotransmitter release by reducing calcium ion currents and increasing potassium ion conductance. Plays a role in the perception of pain. Plays a role in mediating reduced physical activity upon treatment with synthetic opioids. Plays a role in the regulation of salivation in response to synthetic opioids. May play a role in arousal and regulation of autonomic and neuroendocrine functions. This Bos taurus (Bovine) protein is Kappa-type opioid receptor (OPRK1).